We begin with the raw amino-acid sequence, 85 residues long: V-type proton ATPase subunit f (85 aa).

2 helical membrane-spanning segments follow: residues 13–33 (CTGL…LFSI) and 56–76 (CLGA…QVIV).

As to quaternary structure, V-ATPase is a heteromultimeric enzyme composed of a peripheral catalytic V1 complex (components A to H) attached to an integral membrane V0 proton pore complex (components: a, c, c', c'', d, e, f and VOA1).

The protein resides in the endoplasmic reticulum membrane. In terms of biological role, accessory component of the V0 complex of vacuolar(H+)-ATPase (V-ATPase), a multisubunit enzyme composed of a peripheral complex (V1) that hydrolyzes ATP and a membrane integral complex (V0) that translocates protons. V-ATPase is responsible for acidifying and maintaining the pH of intracellular compartments. This chain is V-type proton ATPase subunit f, found in Schizosaccharomyces pombe (strain 972 / ATCC 24843) (Fission yeast).